The sequence spans 411 residues: Serine--tRNA ligase (411 aa).

226–228 contributes to the L-serine binding site; sequence TSE. 257–259 contacts ATP; sequence RKE. Glu280 provides a ligand contact to L-serine. 344–347 lines the ATP pocket; it reads EISS. Ser379 provides a ligand contact to L-serine.

This sequence belongs to the class-II aminoacyl-tRNA synthetase family. Type-1 seryl-tRNA synthetase subfamily. As to quaternary structure, homodimer. The tRNA molecule binds across the dimer.

The protein resides in the cytoplasm. The catalysed reaction is tRNA(Ser) + L-serine + ATP = L-seryl-tRNA(Ser) + AMP + diphosphate + H(+). It carries out the reaction tRNA(Sec) + L-serine + ATP = L-seryl-tRNA(Sec) + AMP + diphosphate + H(+). It participates in aminoacyl-tRNA biosynthesis; selenocysteinyl-tRNA(Sec) biosynthesis; L-seryl-tRNA(Sec) from L-serine and tRNA(Sec): step 1/1. Functionally, catalyzes the attachment of serine to tRNA(Ser). Is also able to aminoacylate tRNA(Sec) with serine, to form the misacylated tRNA L-seryl-tRNA(Sec), which will be further converted into selenocysteinyl-tRNA(Sec). This is Serine--tRNA ligase from Campylobacter jejuni subsp. jejuni serotype O:23/36 (strain 81-176).